The primary structure comprises 135 residues: Holo-[acyl-carrier-protein] synthase (135 aa).

2 residues coordinate Mg(2+): Asp-9 and Glu-63.

It belongs to the P-Pant transferase superfamily. AcpS family. Mg(2+) serves as cofactor.

Its subcellular location is the cytoplasm. It catalyses the reaction apo-[ACP] + CoA = holo-[ACP] + adenosine 3',5'-bisphosphate + H(+). Transfers the 4'-phosphopantetheine moiety from coenzyme A to a Ser of acyl-carrier-protein. The sequence is that of Holo-[acyl-carrier-protein] synthase from Paraburkholderia phymatum (strain DSM 17167 / CIP 108236 / LMG 21445 / STM815) (Burkholderia phymatum).